The primary structure comprises 506 residues: Maturase K (506 aa).

It belongs to the intron maturase 2 family. MatK subfamily.

Its subcellular location is the plastid. The protein resides in the chloroplast. Usually encoded in the trnK tRNA gene intron. Probably assists in splicing its own and other chloroplast group II introns. The polypeptide is Maturase K (Lathyrus sativus (White vetchling)).